The following is a 347-amino-acid chain: Phosphate acyltransferase (347 aa).

Belongs to the PlsX family. As to quaternary structure, homodimer. Probably interacts with PlsY.

It is found in the cytoplasm. The enzyme catalyses a fatty acyl-[ACP] + phosphate = an acyl phosphate + holo-[ACP]. Its pathway is lipid metabolism; phospholipid metabolism. Its function is as follows. Catalyzes the reversible formation of acyl-phosphate (acyl-PO(4)) from acyl-[acyl-carrier-protein] (acyl-ACP). This enzyme utilizes acyl-ACP as fatty acyl donor, but not acyl-CoA. The protein is Phosphate acyltransferase of Pediococcus pentosaceus (strain ATCC 25745 / CCUG 21536 / LMG 10740 / 183-1w).